The primary structure comprises 522 residues: Light-independent protochlorophyllide reductase subunit B (522 aa).

Aspartate 36 is a [4Fe-4S] cluster binding site. The active-site Proton donor is the aspartate 290. Substrate is bound at residue 425-426; it reads GL.

This sequence belongs to the ChlB/BchB/BchZ family. Protochlorophyllide reductase is composed of three subunits; ChlL, ChlN and ChlB. Forms a heterotetramer of two ChlB and two ChlN subunits. It depends on [4Fe-4S] cluster as a cofactor.

It catalyses the reaction chlorophyllide a + oxidized 2[4Fe-4S]-[ferredoxin] + 2 ADP + 2 phosphate = protochlorophyllide a + reduced 2[4Fe-4S]-[ferredoxin] + 2 ATP + 2 H2O. It participates in porphyrin-containing compound metabolism; chlorophyll biosynthesis (light-independent). Functionally, component of the dark-operative protochlorophyllide reductase (DPOR) that uses Mg-ATP and reduced ferredoxin to reduce ring D of protochlorophyllide (Pchlide) to form chlorophyllide a (Chlide). This reaction is light-independent. The NB-protein (ChlN-ChlB) is the catalytic component of the complex. The protein is Light-independent protochlorophyllide reductase subunit B of Synechococcus sp. (strain CC9311).